Reading from the N-terminus, the 212-residue chain is ATP-dependent dethiobiotin synthetase BioD (212 aa).

13 to 18 (GIGKTV) is a binding site for ATP. Thr-17 lines the Mg(2+) pocket. Residue Lys-33 is part of the active site. Mg(2+) is bound at residue Glu-100. Residues 100–103 (EGAG) and 184–186 (PHV) contribute to the ATP site.

Belongs to the dethiobiotin synthetase family. In terms of assembly, homodimer. The cofactor is Mg(2+).

It is found in the cytoplasm. The catalysed reaction is (7R,8S)-7,8-diammoniononanoate + CO2 + ATP = (4R,5S)-dethiobiotin + ADP + phosphate + 3 H(+). It functions in the pathway cofactor biosynthesis; biotin biosynthesis; biotin from 7,8-diaminononanoate: step 1/2. In terms of biological role, catalyzes a mechanistically unusual reaction, the ATP-dependent insertion of CO2 between the N7 and N8 nitrogen atoms of 7,8-diaminopelargonic acid (DAPA, also called 7,8-diammoniononanoate) to form a ureido ring. In Nitrobacter hamburgensis (strain DSM 10229 / NCIMB 13809 / X14), this protein is ATP-dependent dethiobiotin synthetase BioD.